A 305-amino-acid polypeptide reads, in one-letter code: UDP-3-O-acyl-N-acetylglucosamine deacetylase (305 aa).

Residues histidine 78, histidine 237, and aspartate 241 each coordinate Zn(2+). The Proton donor role is filled by histidine 264.

Belongs to the LpxC family. Zn(2+) serves as cofactor.

It catalyses the reaction a UDP-3-O-[(3R)-3-hydroxyacyl]-N-acetyl-alpha-D-glucosamine + H2O = a UDP-3-O-[(3R)-3-hydroxyacyl]-alpha-D-glucosamine + acetate. Its pathway is glycolipid biosynthesis; lipid IV(A) biosynthesis; lipid IV(A) from (3R)-3-hydroxytetradecanoyl-[acyl-carrier-protein] and UDP-N-acetyl-alpha-D-glucosamine: step 2/6. Functionally, catalyzes the hydrolysis of UDP-3-O-myristoyl-N-acetylglucosamine to form UDP-3-O-myristoylglucosamine and acetate, the committed step in lipid A biosynthesis. The polypeptide is UDP-3-O-acyl-N-acetylglucosamine deacetylase (Burkholderia thailandensis (strain ATCC 700388 / DSM 13276 / CCUG 48851 / CIP 106301 / E264)).